A 318-amino-acid polypeptide reads, in one-letter code: MSAGGEHLKDEGTRRQVVLAGGIAGLVSRFCVAPLDVVKIRLQLQIHSLSDPTSHQNIKGPVYKGTLPTIRSIVREEGITGLWKGNIPAELMYVCYGAIQFAAYRTTTQALSQLDPYRLPPPAESFVAGATAGGLATASTYPLDLLRTRFAAQGTERVYTSLYASVRDIAQNEGPKGFFRGCSAAVGQIVPYMGLFFATYESLRPVMSGLHDLPFGSGDAAAGVVASVLAKTGVFPLDLVRKRLQVQGPTRSKYVHRNIPEYQGVYNTMAMIVRTQGMRGLYRGLTVSLFKAAPASAVTMWTYEKSLHYLRELEVASE.

Helical transmembrane passes span 12–28, 91–107, 125–141, 181–197, 221–237, and 284–301; these read GTRR…GLVS, LMYV…YRTT, SFVA…ASTY, GCSA…GLFF, AAGV…VFPL, and GLTV…VTMW. 3 Solcar repeats span residues 12-110, 120-206, and 214-309; these read GTRR…TTQA, PPPA…LRPV, and PFGS…SLHY.

The protein belongs to the mitochondrial carrier (TC 2.A.29) family.

The protein localises to the mitochondrion inner membrane. Functionally, mitochondrial transporter that mediates uptake of thiamine pyrophosphate (ThPP) into mitochondria. In Aspergillus oryzae (strain ATCC 42149 / RIB 40) (Yellow koji mold), this protein is Mitochondrial thiamine pyrophosphate carrier 1 (tpc1).